The chain runs to 116 residues: Non-specific lipid-transfer protein (116 aa).

Positions 1-22 are cleaved as a signal peptide; it reads MSLKLACVVVLCMVVGAPLAQG. Intrachain disulfides connect C36–C52, C53–C98, and C73–C112.

This sequence belongs to the plant LTP family.

Functionally, plant non-specific lipid-transfer proteins transfer phospholipids as well as galactolipids across membranes. May play a role in wax or cutin deposition in the cell walls of expanding epidermal cells and certain secretory tissues. The protein is Non-specific lipid-transfer protein of Gossypium hirsutum (Upland cotton).